The sequence spans 39 residues: Cytochrome b559 subunit beta (39 aa).

A helical transmembrane segment spans residues 14–30 (WLAVHGLAVPTVFFLGS). His-18 is a heme binding site.

This sequence belongs to the PsbE/PsbF family. In terms of assembly, heterodimer of an alpha subunit and a beta subunit. PSII is composed of 1 copy each of membrane proteins PsbA, PsbB, PsbC, PsbD, PsbE, PsbF, PsbH, PsbI, PsbJ, PsbK, PsbL, PsbM, PsbT, PsbX, PsbY, PsbZ, Psb30/Ycf12, at least 3 peripheral proteins of the oxygen-evolving complex and a large number of cofactors. It forms dimeric complexes. Heme b is required as a cofactor.

It is found in the plastid. It localises to the chloroplast thylakoid membrane. Functionally, this b-type cytochrome is tightly associated with the reaction center of photosystem II (PSII). PSII is a light-driven water:plastoquinone oxidoreductase that uses light energy to abstract electrons from H(2)O, generating O(2) and a proton gradient subsequently used for ATP formation. It consists of a core antenna complex that captures photons, and an electron transfer chain that converts photonic excitation into a charge separation. This Pinus koraiensis (Korean pine) protein is Cytochrome b559 subunit beta.